Reading from the N-terminus, the 144-residue chain is 3-dehydroquinate dehydratase (144 aa).

The active-site Proton acceptor is Tyr-22. Substrate-binding residues include Asn-73, His-79, and Asp-86. His-99 (proton donor) is an active-site residue. Substrate-binding positions include 100-101 (IS) and Arg-110.

This sequence belongs to the type-II 3-dehydroquinase family. As to quaternary structure, homododecamer.

It carries out the reaction 3-dehydroquinate = 3-dehydroshikimate + H2O. It functions in the pathway metabolic intermediate biosynthesis; chorismate biosynthesis; chorismate from D-erythrose 4-phosphate and phosphoenolpyruvate: step 3/7. Functionally, catalyzes a trans-dehydration via an enolate intermediate. This is 3-dehydroquinate dehydratase from Clostridium acetobutylicum (strain ATCC 824 / DSM 792 / JCM 1419 / IAM 19013 / LMG 5710 / NBRC 13948 / NRRL B-527 / VKM B-1787 / 2291 / W).